The primary structure comprises 407 residues: Imidazolonepropionase (407 aa).

Residues His-74 and His-76 each contribute to the Fe(3+) site. The Zn(2+) site is built by His-74 and His-76. 4-imidazolone-5-propanoate is bound by residues Arg-83, Tyr-146, and His-179. Position 146 (Tyr-146) interacts with N-formimidoyl-L-glutamate. His-244 contributes to the Fe(3+) binding site. Residue His-244 participates in Zn(2+) binding. Residue Gln-247 coordinates 4-imidazolone-5-propanoate. Asp-319 provides a ligand contact to Fe(3+). Asp-319 contributes to the Zn(2+) binding site. The N-formimidoyl-L-glutamate site is built by Asn-321 and Gly-323. Thr-324 contributes to the 4-imidazolone-5-propanoate binding site.

It belongs to the metallo-dependent hydrolases superfamily. HutI family. Requires Zn(2+) as cofactor. The cofactor is Fe(3+).

The protein resides in the cytoplasm. The catalysed reaction is 4-imidazolone-5-propanoate + H2O = N-formimidoyl-L-glutamate. Its pathway is amino-acid degradation; L-histidine degradation into L-glutamate; N-formimidoyl-L-glutamate from L-histidine: step 3/3. In terms of biological role, catalyzes the hydrolytic cleavage of the carbon-nitrogen bond in imidazolone-5-propanoate to yield N-formimidoyl-L-glutamate. It is the third step in the universal histidine degradation pathway. In Salmonella agona (strain SL483), this protein is Imidazolonepropionase.